We begin with the raw amino-acid sequence, 205 residues long: Casparian strip membrane protein 4 (205 aa).

Over 1-58 (MDIEKTGSRREEEEPIVQKPKLEKGKGKAHVFAPPMNYSRIMEKHKQEKVSMAGWKRG) the chain is Cytoplasmic. A helical membrane pass occupies residues 59–79 (VAIFDFVLRLIAAITAMAAAA). Over 80–109 (KMATTEETLPFFTQFLQFSADYTDLPTLSS) the chain is Extracellular. A helical membrane pass occupies residues 110–130 (FVIVNSIVGGYLTLSLPFSIV). At 131 to 148 (CILRPLAVPPRLFLILCD) the chain is on the cytoplasmic side. A helical membrane pass occupies residues 149-169 (TAMMGLTMVAASASAAIVYLA). Residues 170–205 (HNGNSSSNWLPVCQQFGDFCKERVAPWWLPLLQRLF) are Extracellular-facing. An N-linked (GlcNAc...) asparagine glycan is attached at Asn-173.

Belongs to the Casparian strip membrane proteins (CASP) family. As to quaternary structure, homodimer and heterodimers.

Its subcellular location is the cell membrane. In terms of biological role, regulates membrane-cell wall junctions and localized cell wall deposition. Required for establishment of the Casparian strip membrane domain (CSD) and the subsequent formation of Casparian strips, a cell wall modification of the root endodermis that determines an apoplastic barrier between the intraorganismal apoplasm and the extraorganismal apoplasm and prevents lateral diffusion. The sequence is that of Casparian strip membrane protein 4 from Raphanus sativus (Radish).